The sequence spans 230 residues: GTP cyclohydrolase III (230 aa).

The protein belongs to the archaeal-type GTP cyclohydrolase family.

It catalyses the reaction GTP + 3 H2O = 2-amino-5-formylamino-6-(5-phospho-D-ribosylamino)pyrimidin-4(3H)-one + 2 phosphate + 2 H(+). Its function is as follows. Catalyzes the formation of 2-amino-5-formylamino-6-ribofuranosylamino-4(3H)-pyrimidinone ribonucleotide monophosphate and inorganic phosphate from GTP. Also has an independent pyrophosphate phosphohydrolase activity. The chain is GTP cyclohydrolase III from Saccharolobus islandicus (strain M.14.25 / Kamchatka #1) (Sulfolobus islandicus).